Here is a 224-residue protein sequence, read N- to C-terminus: Small ribosomal subunit protein uS5 (224 aa).

The tract at residues 1–38 (MAEQSAGGQGAPEGRDSRDSREGRGRRDGGRGGRDSDK) is disordered. Residues 13-38 (EGRDSRDSREGRGRRDGGRGGRDSDK) are compositionally biased toward basic and acidic residues. The S5 DRBM domain maps to 41 to 104 (YLERVVAINR…EEARKGFFRV (64 aa)).

It belongs to the universal ribosomal protein uS5 family. As to quaternary structure, part of the 30S ribosomal subunit. Contacts proteins S4 and S8.

With S4 and S12 plays an important role in translational accuracy. Its function is as follows. Located at the back of the 30S subunit body where it stabilizes the conformation of the head with respect to the body. This is Small ribosomal subunit protein uS5 from Mycobacterium ulcerans (strain Agy99).